The sequence spans 103 residues: Large ribosomal subunit protein uL23 (103 aa).

The protein belongs to the universal ribosomal protein uL23 family. Part of the 50S ribosomal subunit. Contacts protein L29, and trigger factor when it is bound to the ribosome.

One of the early assembly proteins it binds 23S rRNA. One of the proteins that surrounds the polypeptide exit tunnel on the outside of the ribosome. Forms the main docking site for trigger factor binding to the ribosome. The polypeptide is Large ribosomal subunit protein uL23 (Chlorobium chlorochromatii (strain CaD3)).